A 434-amino-acid chain; its full sequence is GTPase Obg (434 aa).

One can recognise an Obg domain in the interval 4-162; it reads ADFIDRIVIY…RKLVLELKLL (159 aa). The 171-residue stretch at 163-333 folds into the OBG-type G domain; the sequence is ADVGLVGYPN…IVYKLAEIVK (171 aa). GTP is bound by residues 169-176, 194-198, 215-218, 285-288, and 314-316; these read GYPNVGKS, FTTTI, DIPG, NKID, and SII. Residues Ser-176 and Thr-196 each contribute to the Mg(2+) site. Residues 355–434 enclose the OCT domain; it reads LWKELPERFN…VAQRAFEYKE (80 aa).

The protein belongs to the TRAFAC class OBG-HflX-like GTPase superfamily. OBG GTPase family. As to quaternary structure, monomer. Mg(2+) serves as cofactor.

Its subcellular location is the cytoplasm. Functionally, an essential GTPase which binds GTP, GDP and possibly (p)ppGpp with moderate affinity, with high nucleotide exchange rates and a fairly low GTP hydrolysis rate. Plays a role in control of the cell cycle, stress response, ribosome biogenesis and in those bacteria that undergo differentiation, in morphogenesis control. This Thermosipho africanus (strain TCF52B) protein is GTPase Obg.